The primary structure comprises 730 residues: Translation initiation factor IF-2 (730 aa).

The disordered stretch occupies residues 48–151 (GNGNQKQGGS…NKAKPLPEKV (104 aa)). Basic and acidic residues-rich tracts occupy residues 61 to 77 (EQQK…DHGQ) and 89 to 104 (NQHD…KGKA). The span at 110-123 (KPKHKGNKNKKQHQ) shows a compositional bias: basic residues. Basic and acidic residues predominate over residues 137–148 (RQPEMNKAKPLP). Positions 231-400 (ERPPVVTIMG…LLVAEVEELK (170 aa)) constitute a tr-type G domain. The segment at 240 to 247 (GHVDHGKT) is G1. 240-247 (GHVDHGKT) contacts GTP. Residues 265–269 (GITQH) form a G2 region. The G3 stretch occupies residues 286-289 (DTPG). GTP is bound by residues 286 to 290 (DTPGH) and 340 to 343 (NKMD). A G4 region spans residues 340 to 343 (NKMD). Positions 376-378 (SAL) are G5.

It belongs to the TRAFAC class translation factor GTPase superfamily. Classic translation factor GTPase family. IF-2 subfamily.

Its subcellular location is the cytoplasm. Functionally, one of the essential components for the initiation of protein synthesis. Protects formylmethionyl-tRNA from spontaneous hydrolysis and promotes its binding to the 30S ribosomal subunits. Also involved in the hydrolysis of GTP during the formation of the 70S ribosomal complex. The chain is Translation initiation factor IF-2 from Halalkalibacterium halodurans (strain ATCC BAA-125 / DSM 18197 / FERM 7344 / JCM 9153 / C-125) (Bacillus halodurans).